The chain runs to 469 residues: Deoxyribodipyrimidine photo-lyase (469 aa).

A Photolyase/cryptochrome alpha/beta domain is found at 1-133 (MRLVWFRRDL…IWSAFDDKCV (133 aa)). Glutamate 107 lines the (6R)-5,10-methylene-5,6,7,8-tetrahydrofolate pocket.

It belongs to the DNA photolyase class-1 family. In terms of assembly, monomer. Requires FAD as cofactor. (6R)-5,10-methylene-5,6,7,8-tetrahydrofolate is required as a cofactor.

It catalyses the reaction cyclobutadipyrimidine (in DNA) = 2 pyrimidine residues (in DNA).. Functionally, involved in repair of UV radiation-induced DNA damage. Catalyzes the light-dependent monomerization (300-600 nm) of cyclobutyl pyrimidine dimers (in cis-syn configuration), which are formed between adjacent bases on the same DNA strand upon exposure to ultraviolet radiation. This chain is Deoxyribodipyrimidine photo-lyase (phrA), found in Vibrio cholerae serotype O1 (strain ATCC 39315 / El Tor Inaba N16961).